A 364-amino-acid chain; its full sequence is Peroxisomal membrane protein PEX16 (364 aa).

The residue at position 200 (S200) is a Phosphoserine.

It belongs to the peroxin-16 family.

The protein localises to the peroxisome membrane. In terms of biological role, involved in the biogenesis of peroxisomes. In Schizosaccharomyces pombe (strain 972 / ATCC 24843) (Fission yeast), this protein is Peroxisomal membrane protein PEX16 (pex16).